The primary structure comprises 151 residues: Transcriptional regulator MraZ (151 aa).

SpoVT-AbrB domains follow at residues 5–51 (AHEL…PVAE) and 81–124 (AEIL…GREQ).

The protein belongs to the MraZ family. In terms of assembly, forms oligomers.

Its subcellular location is the cytoplasm. It is found in the nucleoid. In Neisseria gonorrhoeae (strain ATCC 700825 / FA 1090), this protein is Transcriptional regulator MraZ.